Here is a 425-residue protein sequence, read N- to C-terminus: 5-aminovalerate aminotransferase DavT (425 aa).

Residues 112–113 (GS), Y139, and 240–243 (DEVQ) each bind pyridoxal 5'-phosphate. K269 bears the N6-(pyridoxal phosphate)lysine mark. Residue T298 coordinates pyridoxal 5'-phosphate.

Belongs to the class-III pyridoxal-phosphate-dependent aminotransferase family. Pyridoxal 5'-phosphate serves as cofactor.

The enzyme catalyses 5-aminopentanoate + 2-oxoglutarate = 5-oxopentanoate + L-glutamate. In terms of biological role, catalyzes the conversion of 5-aminovalerate to 5-oxopentanoate. The protein is 5-aminovalerate aminotransferase DavT (davT) of Pseudomonas putida (strain ATCC 47054 / DSM 6125 / CFBP 8728 / NCIMB 11950 / KT2440).